We begin with the raw amino-acid sequence, 817 residues long: Phosphoenolpyruvate synthase (817 aa).

Catalysis depends on histidine 442, which acts as the Tele-phosphohistidine intermediate. Substrate is bound by residues arginine 540, arginine 587, glutamate 684, glycine 706, threonine 707, asparagine 708, and aspartate 709. Glutamate 684 contributes to the Mg(2+) binding site. Mg(2+) is bound at residue aspartate 709. Cysteine 756 (proton donor) is an active-site residue.

Belongs to the PEP-utilizing enzyme family. In terms of assembly, homooctamer. Mg(2+) serves as cofactor.

The enzyme catalyses pyruvate + ATP + H2O = phosphoenolpyruvate + AMP + phosphate + 2 H(+). The protein operates within carbohydrate biosynthesis; gluconeogenesis. Functionally, catalyzes the phosphorylation of pyruvate to phosphoenolpyruvate. This chain is Phosphoenolpyruvate synthase (ppsA), found in Pyrococcus furiosus (strain ATCC 43587 / DSM 3638 / JCM 8422 / Vc1).